Consider the following 1337-residue polypeptide: Protein cordon-bleu (1337 aa).

The segment at 1 to 41 (MDAPRALAAKPPTGRKMKARAPPPPGKPAAQNVHSEQKLPH) is disordered. 6 positions are modified to phosphoserine: serine 47, serine 50, serine 212, serine 235, serine 272, and serine 294. 2 disordered regions span residues 260 to 556 (SKAE…NDDE) and 647 to 768 (IASQ…HHGQ). Residues 288 to 317 (CVTTPNSPSLHSRSLTLGPSLSLGNISGVS) are compositionally biased toward polar residues. The short motif at 323–328 (KKRRAP) is the KKRRAP 1 element. Phosphoserine occurs at positions 346 and 349. The KKRRAP 2 signature appears at 356–361 (KKRRAP). Residues 361–374 (PAPPPPQQPPPSPV) show a composition bias toward pro residues. Serine 372 carries the phosphoserine modification. The span at 377 to 387 (NRKEDKEENRK) shows a compositional bias: basic and acidic residues. Over residues 411–423 (LVLPPPPPYPPPD) the composition is skewed to pro residues. The span at 469–480 (ESEETASEDTTE) shows a compositional bias: acidic residues. The segment covering 484–500 (VMSSPSDAISLDSQQDS) has biased composition (polar residues). At threonine 522 the chain carries Phosphothreonine. Over residues 526–541 (GPQKSPSWGKSGSGSS) the composition is skewed to low complexity. Polar residues-rich tracts occupy residues 647–666 (IASQ…QPFV) and 687–710 (QPTL…TSLV). At serine 649 the chain carries Phosphoserine. Residues 714–736 (LIDDPKAKDKGKVHGSSHSEKTQ) are compositionally biased toward basic and acidic residues. At serine 816 the chain carries Phosphoserine. Disordered stretches follow at residues 892–923 (TPQQ…SVKV) and 967–991 (KATT…DDAA). Serine 1038 carries the post-translational modification Phosphoserine. The segment covering 1070–1090 (GFNEKQTTSNQKANSTSNFSQ) has biased composition (polar residues). Disordered regions lie at residues 1070-1094 (GFNE…ALDK), 1113-1133 (MNGS…KEST), 1145-1168 (KPSS…FGPK), and 1192-1221 (AIHS…SYVE). Serine 1128 is modified (phosphoserine). WH2 domains are found at residues 1185–1205 (LHSA…LRKT) and 1225–1245 (ERSA…LRKV). Positions 1197-1214 (GGREKLRKTAEQTSEGRP) are enriched in basic and acidic residues. Positions 1262–1310 (GAPGLDKPQQEDLGLPPPPALPPPPAPAPQAPSASVTVSRFSTGTPSNS) are disordered. Pro residues predominate over residues 1276–1291 (LPPPPALPPPPAPAPQ). Positions 1297–1310 (VTVSRFSTGTPSNS) are enriched in polar residues. Phosphoserine is present on serine 1303. Residues 1313–1333 (ARQALMDAIRSGTGAARLRKV) form the WH2 3 domain.

In terms of assembly, identified in a complex composed of COBL, PACSIN1 and WASL. Interacts with PACSIN1, PACSIN2 and PACSIN3. Identified in a complex composed of ACTA1, COBL, GSN and TMSB4X. Interacts (via WH2 domains) with actin monomers. Interacts with DBNL. Detected in brain cortex and in the Purkinje cell layer in the cerebellum. Detected in hippocampus neurons, and at lower levels in testis, lung and spleen (at protein level). Detected in embryonic neural tube.

It is found in the cell membrane. It localises to the cytoplasm. The protein localises to the cytoskeleton. Its subcellular location is the cell projection. The protein resides in the ruffle. Plays an important role in the reorganization of the actin cytoskeleton. Binds to and sequesters actin monomers (G actin). Nucleates actin polymerization by assembling three actin monomers in cross-filament orientation and thereby promotes growth of actin filaments at the barbed end. Can also mediate actin depolymerization at barbed ends and severing of actin filaments. Promotes formation of cell ruffles. Regulates neuron morphogenesis and increases branching of axons and dendrites. Regulates dendrite branching in Purkinje cells. In Mus musculus (Mouse), this protein is Protein cordon-bleu (Cobl).